The following is a 193-amino-acid chain: dCTP deaminase (193 aa).

DCTP is bound by residues 110–115 (RSSLAR), aspartate 128, 136–138 (VLE), tyrosine 171, lysine 178, and glutamine 182. Glutamate 138 functions as the Proton donor/acceptor in the catalytic mechanism.

The protein belongs to the dCTP deaminase family. Homotrimer.

The enzyme catalyses dCTP + H2O + H(+) = dUTP + NH4(+). The protein operates within pyrimidine metabolism; dUMP biosynthesis; dUMP from dCTP (dUTP route): step 1/2. Its function is as follows. Catalyzes the deamination of dCTP to dUTP. This is dCTP deaminase from Escherichia coli (strain K12 / MC4100 / BW2952).